Here is a 194-residue protein sequence, read N- to C-terminus: GTP cyclohydrolase 1 (194 aa).

The Zn(2+) site is built by cysteine 85, histidine 88, and cysteine 156.

This sequence belongs to the GTP cyclohydrolase I family. Toroid-shaped homodecamer, composed of two pentamers of five dimers.

It catalyses the reaction GTP + H2O = 7,8-dihydroneopterin 3'-triphosphate + formate + H(+). Its pathway is cofactor biosynthesis; 7,8-dihydroneopterin triphosphate biosynthesis; 7,8-dihydroneopterin triphosphate from GTP: step 1/1. In Bacteroides fragilis (strain YCH46), this protein is GTP cyclohydrolase 1.